Reading from the N-terminus, the 1072-residue chain is Dyslexia-associated protein KIAA0319 (1072 aa).

Positions 1 to 20 are cleaved as a signal peptide; it reads MAPPTGVLSSLLLLVTIAGC. An MANSC domain is found at 21–99; sequence ARKQCSEGRT…PKKMGPIRSY (79 aa). The Extracellular portion of the chain corresponds to 21–955; that stretch reads ARKQCSEGRT…WDGESNCEWS (935 aa). Disordered regions lie at residues 168 to 277 and 295 to 327; these read LQPS…SLPP and VTPG…SPTT. Residues asparagine 196, asparagine 219, and asparagine 262 are each glycosylated (N-linked (GlcNAc...) asparagine). A compositionally biased stretch (polar residues) spans 254–265; the sequence is SQLQEQSSNSSG. Over residues 311-320 the composition is skewed to low complexity; it reads AAPSESTPSE. 5 PKD domains span residues 341 to 427, 435 to 524, 530 to 620, 621 to 714, and 720 to 811; these read DNLI…VKPA, VAVV…VNNA, VANA…VQPE, NNRP…VKKE, and RARA…VQPD. Asparagine 394, asparagine 421, asparagine 498, asparagine 513, asparagine 536, and asparagine 551 each carry an N-linked (GlcNAc...) asparagine glycan. Residue asparagine 733 is glycosylated (N-linked (GlcNAc...) asparagine). Residues 956–976 traverse the membrane as a helical segment; the sequence is IFYVTVLAFTLIVLTGGFTWL. At 977-1072 the chain is on the cytoplasmic side; it reads CICCCKRQKR…ASFSYCSKDR (96 aa). Residues 995 to 998 carry the Endocytosis signal motif; it reads YTIL. Residues 1045-1072 are disordered; sequence KMERGNPKVSMNGSIRNGASFSYCSKDR. A compositionally biased stretch (polar residues) spans 1053-1072; that stretch reads VSMNGSIRNGASFSYCSKDR.

Homodimer. Interacts with AP2M1; required for clathrin-mediated endocytosis. N-glycosylated. In terms of processing, O-glycosylated. Post-translationally, shedding of the extracellular domain and intramembrane cleavage produce several proteolytic products. The intramembrane cleavage releases a soluble cytoplasmic polypeptide that translocates to the nucleolus. As to expression, detected in adult brain cortex and fetal frontal lobe (at protein level). Highly expressed in brain cortex, putamen, amygdala, hippocampus and cerebellum.

The protein localises to the cell membrane. Its subcellular location is the early endosome membrane. Its function is as follows. Involved in neuronal migration during development of the cerebral neocortex. May function in a cell autonomous and a non-cell autonomous manner and play a role in appropriate adhesion between migrating neurons and radial glial fibers. May also regulate growth and differentiation of dendrites. The chain is Dyslexia-associated protein KIAA0319 (KIAA0319) from Homo sapiens (Human).